The primary structure comprises 633 residues: Chaperone protein dnaK2 (633 aa).

Thr197 bears the Phosphothreonine; by autocatalysis mark. Residues 513-532 (AEQNASSDKERREKIERKNQ) are compositionally biased toward basic and acidic residues. Disordered stretches follow at residues 513-534 (AEQNASSDKERREKIERKNQAD) and 598-633 (QQAGGGAAPGAAPQDGGTTSSDGGDDVIDADFTETK). Residues 606 to 619 (PGAAPQDGGTTSSD) are compositionally biased toward low complexity. Residues 620–633 (GGDDVIDADFTETK) are compositionally biased toward acidic residues.

It belongs to the heat shock protein 70 family.

Acts as a chaperone. The polypeptide is Chaperone protein dnaK2 (dnaK2) (Nostoc sp. (strain PCC 7120 / SAG 25.82 / UTEX 2576)).